The chain runs to 1119 residues: Protein translocase subunit SecA (1119 aa).

Residues Q177, 195–199 (GEGKT), and D692 contribute to the ATP site. The disordered stretch occupies residues 1025–1081 (APSIHEARQTKSKEKVETRKEEIPNMDERAAQSRAAGNTQRQQPEVTETIVRDRPKI). A compositionally biased stretch (basic and acidic residues) spans 1029–1055 (HEARQTKSKEKVETRKEEIPNMDERAA). Residues 1059-1070 (AAGNTQRQQPEV) are compositionally biased toward polar residues.

Belongs to the SecA family. Monomer and homodimer. Part of the essential Sec protein translocation apparatus which comprises SecA, SecYEG and auxiliary proteins SecDF. Other proteins may also be involved.

The protein resides in the cell inner membrane. The protein localises to the cytoplasm. It catalyses the reaction ATP + H2O + cellular proteinSide 1 = ADP + phosphate + cellular proteinSide 2.. Its function is as follows. Part of the Sec protein translocase complex. Interacts with the SecYEG preprotein conducting channel. Has a central role in coupling the hydrolysis of ATP to the transfer of proteins into and across the cell membrane, serving as an ATP-driven molecular motor driving the stepwise translocation of polypeptide chains across the membrane. In Christiangramia forsetii (strain DSM 17595 / CGMCC 1.15422 / KT0803) (Gramella forsetii), this protein is Protein translocase subunit SecA.